Here is a 69-residue protein sequence, read N- to C-terminus: Large ribosomal subunit protein uL29 (69 aa).

It belongs to the universal ribosomal protein uL29 family.

The sequence is that of Large ribosomal subunit protein uL29 from Granulibacter bethesdensis (strain ATCC BAA-1260 / CGDNIH1).